The sequence spans 116 residues: Phosphoribosyl-AMP cyclohydrolase (116 aa).

Aspartate 78 is a binding site for Mg(2+). Cysteine 79 lines the Zn(2+) pocket. The Mg(2+) site is built by aspartate 80 and aspartate 82. Cysteine 95 and cysteine 102 together coordinate Zn(2+).

It belongs to the PRA-CH family. In terms of assembly, homodimer. The cofactor is Mg(2+). It depends on Zn(2+) as a cofactor.

The protein localises to the cytoplasm. The catalysed reaction is 1-(5-phospho-beta-D-ribosyl)-5'-AMP + H2O = 1-(5-phospho-beta-D-ribosyl)-5-[(5-phospho-beta-D-ribosylamino)methylideneamino]imidazole-4-carboxamide. It functions in the pathway amino-acid biosynthesis; L-histidine biosynthesis; L-histidine from 5-phospho-alpha-D-ribose 1-diphosphate: step 3/9. In terms of biological role, catalyzes the hydrolysis of the adenine ring of phosphoribosyl-AMP. The chain is Phosphoribosyl-AMP cyclohydrolase from Acidiphilium cryptum (strain JF-5).